We begin with the raw amino-acid sequence, 491 residues long: UDP-N-acetylmuramate--L-alanine ligase (491 aa).

126–132 serves as a coordination point for ATP; it reads GTHGKTT.

This sequence belongs to the MurCDEF family.

The protein localises to the cytoplasm. It catalyses the reaction UDP-N-acetyl-alpha-D-muramate + L-alanine + ATP = UDP-N-acetyl-alpha-D-muramoyl-L-alanine + ADP + phosphate + H(+). It functions in the pathway cell wall biogenesis; peptidoglycan biosynthesis. Functionally, cell wall formation. This is UDP-N-acetylmuramate--L-alanine ligase from Yersinia pestis (strain Pestoides F).